The chain runs to 276 residues: Glyoxal reductase (276 aa).

Tyr54 functions as the Proton donor in the catalytic mechanism. Substrate is bound at residue His112. 190–242 (SPLMQGQLLDNEVLTQIAEKHNKSVAQVILRWDLQHGVVTIPKSIKEHRIIEN) is a binding site for NADP(+).

It belongs to the aldo/keto reductase family.

The enzyme catalyses (S)-lactaldehyde + NADP(+) = methylglyoxal + NADPH + H(+). Functionally, reduces glyoxal and methylglyoxal (2-oxopropanal). Is not involved in the vitamin B6 biosynthesis. In Bacillus subtilis (strain 168), this protein is Glyoxal reductase (yvgN).